The following is an 84-amino-acid chain: Gas vesicle protein M1 (84 aa).

Residues 1–25 (MEPTKDETHAIVEFVDVLLRDGAVI) form an interacts with GvpL1 region. Residues 5–21 (KDETHAIVEFVDVLLRD) form an alpha helix 1 region. Beta-strand stretches follow at residues 27–29 (ADV) and 41–43 (ISL). The short motif at 44-48 (RAAIA) is the Conserved in GvpJ1/2 but not GvpA element. Alpha helix stretches follow at residues 46–56 (AIAGMTTMTEY) and 62–84 (WDAA…RRED).

The protein belongs to the gas vesicle GvpA family. As to quaternary structure, gvpF to GvpM interact with each other in vitro, and may form multi-subunit complex(es). Might interact with GvpA1.

The protein resides in the gas vesicle. In terms of biological role, proteins GvpF to GvpM might be involved in nucleating gas vesicle formation. A minor component of the gas vesicle. Gas vesicles are hollow, gas filled proteinaceous nanostructures found in several microbial planktonic microorganisms. They allow positioning of halobacteria at the optimal depth for growth in the poorly aerated, shallow brine pools of their habitat. Functionally, expression of a 9.5 kb p-vac DNA fragment containing 2 divergently transcribed regions (gvpD-gvpE-gvpF-gvpG-gvpH-gvpI-gvpJ-gvpK-gvpL-gvpM and gvpA-gvpC-gvpN-gvpO) allows H.volcanii to produce gas vesicles. All site-directed mutagenesis is tested in H.volcanii. A minimal gas vesicle can be made in H.volcanii by gvpA1-gvpO1 plus gvpF1-gvpG1-gvpJ1-gvpK1-gvpL1-gvpM1; lack of enough GvpJ1 prevents formation. A similar region restores gas vesicle production in H.halobium without the p-vac locus, but it still has the c-vac locus. The polypeptide is Gas vesicle protein M1 (gvpM11) (Halobacterium salinarum (strain ATCC 700922 / JCM 11081 / NRC-1) (Halobacterium halobium)).